We begin with the raw amino-acid sequence, 183 residues long: Translation initiation factor IF-3 (183 aa).

The protein belongs to the IF-3 family. In terms of assembly, monomer.

The protein localises to the cytoplasm. Its function is as follows. IF-3 binds to the 30S ribosomal subunit and shifts the equilibrium between 70S ribosomes and their 50S and 30S subunits in favor of the free subunits, thus enhancing the availability of 30S subunits on which protein synthesis initiation begins. The chain is Translation initiation factor IF-3 from Pseudomonas entomophila (strain L48).